The primary structure comprises 389 residues: Anhydro-N-acetylmuramic acid kinase (389 aa).

Gly-11–Asp-18 contributes to the ATP binding site.

It belongs to the anhydro-N-acetylmuramic acid kinase family.

The catalysed reaction is 1,6-anhydro-N-acetyl-beta-muramate + ATP + H2O = N-acetyl-D-muramate 6-phosphate + ADP + H(+). Its pathway is amino-sugar metabolism; 1,6-anhydro-N-acetylmuramate degradation. It functions in the pathway cell wall biogenesis; peptidoglycan recycling. Its function is as follows. Catalyzes the specific phosphorylation of 1,6-anhydro-N-acetylmuramic acid (anhMurNAc) with the simultaneous cleavage of the 1,6-anhydro ring, generating MurNAc-6-P. Is required for the utilization of anhMurNAc either imported from the medium or derived from its own cell wall murein, and thus plays a role in cell wall recycling. In Albidiferax ferrireducens (strain ATCC BAA-621 / DSM 15236 / T118) (Rhodoferax ferrireducens), this protein is Anhydro-N-acetylmuramic acid kinase.